We begin with the raw amino-acid sequence, 386 residues long: Tetratricopeptide repeat protein 4 (386 aa).

Met1 carries the N-acetylmethionine modification. At Ser51 the chain carries Phosphoserine. TPR repeat units follow at residues 79–112, 117–150, and 151–184; these read AKTYKDEGNDYFKEKDYKKAVLSYSEGLKKKCAD, AVLYTNRAAAQYYLGNVRSSLNDVLAAKKLKPGH, and LKAIIRGALCHLELKHFAEAVNWCDEGLQIDAKE. Ser244 bears the Phosphoserine mark.

It belongs to the TTC4 family. In terms of assembly, interacts (via TPR repeats) with HSP90AB1. Interacts with HSPA8, CDC6 and TBK1. Interacts with isoform 1 and isoform 3 of MSL1. As to expression, expressed at high levels in the heart, testis, kidney, brain and tongue. Expressed at low levels in the stomach, lung and liver.

It is found in the nucleus. The protein localises to the nucleoplasm. Its subcellular location is the cytoplasm. In terms of biological role, may act as a co-chaperone for HSP90AB1. In Mus musculus (Mouse), this protein is Tetratricopeptide repeat protein 4 (Ttc4).